Consider the following 355-residue polypeptide: Elongation factor Ts (355 aa).

An involved in Mg(2+) ion dislocation from EF-Tu region spans residues 82–85 (TDFV).

It belongs to the EF-Ts family.

It localises to the cytoplasm. Its function is as follows. Associates with the EF-Tu.GDP complex and induces the exchange of GDP to GTP. It remains bound to the aminoacyl-tRNA.EF-Tu.GTP complex up to the GTP hydrolysis stage on the ribosome. The polypeptide is Elongation factor Ts (Helicobacter pylori (strain HPAG1)).